We begin with the raw amino-acid sequence, 321 residues long: Nucleotide-binding protein LI0459 (321 aa).

Residue 41–48 (GMSGAGKS) coordinates ATP.

Belongs to the RapZ-like family.

Functionally, displays ATPase and GTPase activities. The sequence is that of Nucleotide-binding protein LI0459 from Lawsonia intracellularis (strain PHE/MN1-00).